The primary structure comprises 437 residues: Nicotinate phosphoribosyltransferase (437 aa).

Residue histidine 231 is modified to Phosphohistidine; by autocatalysis.

This sequence belongs to the NAPRTase family. Transiently phosphorylated on a His residue during the reaction cycle. Phosphorylation strongly increases the affinity for substrates and increases the rate of nicotinate D-ribonucleotide production. Dephosphorylation regenerates the low-affinity form of the enzyme, leading to product release.

It carries out the reaction nicotinate + 5-phospho-alpha-D-ribose 1-diphosphate + ATP + H2O = nicotinate beta-D-ribonucleotide + ADP + phosphate + diphosphate. Its pathway is cofactor biosynthesis; NAD(+) biosynthesis; nicotinate D-ribonucleotide from nicotinate: step 1/1. Catalyzes the synthesis of beta-nicotinate D-ribonucleotide from nicotinate and 5-phospho-D-ribose 1-phosphate at the expense of ATP. The protein is Nicotinate phosphoribosyltransferase of Vibrio vulnificus (strain YJ016).